Reading from the N-terminus, the 483-residue chain is Regulatory protein ViaA (483 aa).

It belongs to the ViaA family. Homodimer. Interacts with RavA.

It localises to the cytoplasm. Its function is as follows. Component of the RavA-ViaA chaperone complex, which may act on the membrane to optimize the function of some of the respiratory chains. ViaA stimulates the ATPase activity of RavA. This is Regulatory protein ViaA from Escherichia coli O17:K52:H18 (strain UMN026 / ExPEC).